The chain runs to 218 residues: Ras-related protein Rab-4A (218 aa).

Residues glycine 23, threonine 24, glycine 25, lysine 26, serine 27, cysteine 28, serine 42, histidine 44, and threonine 45 each coordinate GTP. A Mg(2+)-binding site is contributed by serine 27. A Switch 1 motif is present at residues 44-49 (HTIGVE). Residues threonine 45 and aspartate 68 each contribute to the Mg(2+) site. Residues 70 to 79 (AGQERFRSVT) carry the Switch 2 motif. Glycine 71 is a binding site for GTP. Glutamine 72 carries the 5-glutamyl serotonin modification. Residues asparagine 126, lysine 127, aspartate 129, alanine 157, and leucine 158 each contribute to the GTP site. Position 190 is a phosphoserine (serine 190). Serine 204 carries the post-translational modification Phosphoserine; by CDK1. S-geranylgeranyl cysteine attachment occurs at residues cysteine 216 and cysteine 218. Cysteine 218 is subject to Cysteine methyl ester.

This sequence belongs to the small GTPase superfamily. Rab family. As to quaternary structure, interacts with SGSM1, SGSM2 and SGSM3. Interacts with RAB11FIP1, RABEP1, ZFYVE20 and RUFY1. Interacts (membrane-bound form) with NDRG1; the interaction involves NDRG1 in vesicular recycling of E-cadherin. Interacts (in GTP-bound form) with GRIPAP1 (via N-terminus). Interacts with RABEP1 and RBSN. Does not interact with HPS4. Interacts with RABEP2; this interaction may mediate VEGFR2 cell surface expression. The cofactor is Mg(2+). Serotonylation of Gln-72 by TGM2 during activation and aggregation of platelets leads to constitutive activation of GTPase activity. Post-translationally, phosphorylated by CDK1 kinase during mitosis.

It localises to the membrane. The protein localises to the cytoplasm. It is found in the early endosome membrane. Its subcellular location is the recycling endosome membrane. The catalysed reaction is GTP + H2O = GDP + phosphate + H(+). With respect to regulation, regulated by guanine nucleotide exchange factors (GEFs) which promote the exchange of bound GDP for free GTP. Regulated by GTPase activating proteins (GAPs) which increase the GTP hydrolysis activity. Inhibited by GDP dissociation inhibitors (GDIs). Functionally, the small GTPases Rab are key regulators of intracellular membrane trafficking, from the formation of transport vesicles to their fusion with membranes. Rabs cycle between an inactive GDP-bound form and an active GTP-bound form that is able to recruit to membranes different sets of downstream effectors directly responsible for vesicle formation, movement, tethering and fusion. RAB4A is involved in protein transport. Also plays a role in vesicular traffic. Mediates VEGFR2 endosomal trafficking to enhance VEGFR2 signaling. Acts as a regulator of platelet alpha-granule release during activation and aggregation of platelets. The sequence is that of Ras-related protein Rab-4A from Rattus norvegicus (Rat).